A 194-amino-acid chain; its full sequence is Imidazoleglycerol-phosphate dehydratase (194 aa).

It belongs to the imidazoleglycerol-phosphate dehydratase family.

It is found in the cytoplasm. It carries out the reaction D-erythro-1-(imidazol-4-yl)glycerol 3-phosphate = 3-(imidazol-4-yl)-2-oxopropyl phosphate + H2O. The protein operates within amino-acid biosynthesis; L-histidine biosynthesis; L-histidine from 5-phospho-alpha-D-ribose 1-diphosphate: step 6/9. This chain is Imidazoleglycerol-phosphate dehydratase, found in Thermoanaerobacter pseudethanolicus (strain ATCC 33223 / 39E) (Clostridium thermohydrosulfuricum).